The chain runs to 568 residues: Dihydroxy-acid dehydratase 1 (568 aa).

The tract at residues 1 to 22 (MAEQTNTPDLKPRSRDVTDGLE) is disordered. Over residues 10–22 (LKPRSRDVTDGLE) the composition is skewed to basic and acidic residues. Cysteine 57 serves as a coordination point for [2Fe-2S] cluster. Aspartate 89 lines the Mg(2+) pocket. Cysteine 130 contacts [2Fe-2S] cluster. Aspartate 131 and lysine 132 together coordinate Mg(2+). Lysine 132 is subject to N6-carboxylysine. A [2Fe-2S] cluster-binding site is contributed by cysteine 207. Residue glutamate 458 participates in Mg(2+) binding. Serine 484 (proton acceptor) is an active-site residue.

This sequence belongs to the IlvD/Edd family. In terms of assembly, homodimer. The cofactor is [2Fe-2S] cluster. Mg(2+) is required as a cofactor.

The catalysed reaction is (2R)-2,3-dihydroxy-3-methylbutanoate = 3-methyl-2-oxobutanoate + H2O. It catalyses the reaction (2R,3R)-2,3-dihydroxy-3-methylpentanoate = (S)-3-methyl-2-oxopentanoate + H2O. Its pathway is amino-acid biosynthesis; L-isoleucine biosynthesis; L-isoleucine from 2-oxobutanoate: step 3/4. It functions in the pathway amino-acid biosynthesis; L-valine biosynthesis; L-valine from pyruvate: step 3/4. Functions in the biosynthesis of branched-chain amino acids. Catalyzes the dehydration of (2R,3R)-2,3-dihydroxy-3-methylpentanoate (2,3-dihydroxy-3-methylvalerate) into 2-oxo-3-methylpentanoate (2-oxo-3-methylvalerate) and of (2R)-2,3-dihydroxy-3-methylbutanoate (2,3-dihydroxyisovalerate) into 2-oxo-3-methylbutanoate (2-oxoisovalerate), the penultimate precursor to L-isoleucine and L-valine, respectively. This Nocardia farcinica (strain IFM 10152) protein is Dihydroxy-acid dehydratase 1.